Here is a 615-residue protein sequence, read N- to C-terminus: Leucine aminopeptidase 2-1 (615 aa).

Substrate contacts are provided by residues 137-139 and 261-266; these read QCQ and PYGGME. Residue His-290 participates in Zn(2+) binding. Catalysis depends on Glu-291, which acts as the Proton acceptor. The Zn(2+) site is built by His-294 and Glu-313. The Proton donor role is filled by Tyr-380.

The protein belongs to the peptidase M1 family. Zn(2+) is required as a cofactor.

It is found in the cytoplasm. The protein resides in the nucleus. It carries out the reaction an epoxide + H2O = an ethanediol. Its function is as follows. Aminopeptidase that preferentially cleaves di- and tripeptides. Also has low epoxide hydrolase activity (in vitro). Can hydrolyze the epoxide leukotriene LTA(4) but it forms preferentially 5,6-dihydroxy-7,9,11,14-eicosatetraenoic acid rather than the cytokine leukotriene B(4) as the product compared to the homologous mammalian enzyme (in vitro). This is Leucine aminopeptidase 2-1 from Meyerozyma guilliermondii (strain ATCC 6260 / CBS 566 / DSM 6381 / JCM 1539 / NBRC 10279 / NRRL Y-324) (Yeast).